A 481-amino-acid chain; its full sequence is Chromosomal replication initiator protein DnaA (481 aa).

The domain I, interacts with DnaA modulators stretch occupies residues 1–74; it reads MSQDLWSFCL…ELGAEFHGAP (74 aa). The tract at residues 74-144 is domain II; it reads PIEIELVLPA…TASDLAYEKT (71 aa). The interval 101–123 is disordered; it reads AGPAPAPTPSQAPAATAAAPAVV. The segment covering 111 to 123 has biased composition (low complexity); sequence QAPAATAAAPAVV. The interval 145–361 is domain III, AAA+ region; that stretch reads RLNADFTFDT…GALNKVVAFA (217 aa). 4 residues coordinate ATP: Gly-189, Gly-191, Lys-192, and Thr-193. Residues 362-481 form a domain IV, binds dsDNA region; the sequence is RFHGRGITLE…VHVLTQVLRG (120 aa).

It belongs to the DnaA family. As to quaternary structure, oligomerizes as a right-handed, spiral filament on DNA at oriC.

The protein localises to the cytoplasm. In terms of biological role, plays an essential role in the initiation and regulation of chromosomal replication. ATP-DnaA binds to the origin of replication (oriC) to initiate formation of the DNA replication initiation complex once per cell cycle. Binds the DnaA box (a 9 base pair repeat at the origin) and separates the double-stranded (ds)DNA. Forms a right-handed helical filament on oriC DNA; dsDNA binds to the exterior of the filament while single-stranded (ss)DNA is stabiized in the filament's interior. The ATP-DnaA-oriC complex binds and stabilizes one strand of the AT-rich DNA unwinding element (DUE), permitting loading of DNA polymerase. After initiation quickly degrades to an ADP-DnaA complex that is not apt for DNA replication. Binds acidic phospholipids. This chain is Chromosomal replication initiator protein DnaA, found in Aromatoleum aromaticum (strain DSM 19018 / LMG 30748 / EbN1) (Azoarcus sp. (strain EbN1)).